We begin with the raw amino-acid sequence, 420 residues long: Dachshund homolog dac-1 (420 aa).

Positions 23 to 77 are disordered; the sequence is PSSSSSSSNNSSSNTSSSNFLSPYEYQESSTSPRDTTDSSGESSLSSSGSSSSLN. Composition is skewed to low complexity over residues 24–41 and 51–77; these read SSSS…SSSN and SSTS…SSLN. Positions 85 to 171 are DACHbox-N; the sequence is KLIKFRGHNV…LLKTSDFEKL (87 aa). Over residues 242-258 the composition is skewed to basic and acidic residues; that stretch reads NSFERADDDDQNQRDAD. The segment at 242–321 is disordered; that stretch reads NSFERADDDD…SSSSSGKNDE (80 aa). Residues 263–273 are compositionally biased toward polar residues; it reads LNLSKSGGNSE. Low complexity predominate over residues 297–317; sequence GGSNSNSLSMSMEAGSSSSSG.

This sequence belongs to the DACH/dachshund family. Expressed in AFD, AWC, ASE and ASK neurons. Expressed in the alae.

The protein resides in the nucleus. In terms of biological role, transcription factor. Plays a role in the thermotactic response. The protein is Dachshund homolog dac-1 of Caenorhabditis elegans.